The primary structure comprises 531 residues: UPF0159 protein CPn_0746/CP_1126/CPj0746/CpB0774 (531 aa).

ThyX domains follow at residues 38–274 (KGAL…AEPH) and 309–511 (PSVQ…FKFV).

This sequence belongs to the UPF0159 family.

The sequence is that of UPF0159 protein CPn_0746/CP_1126/CPj0746/CpB0774 from Chlamydia pneumoniae (Chlamydophila pneumoniae).